Reading from the N-terminus, the 400-residue chain is Enoyl-[acyl-carrier-protein] reductase [NADH] 1 (400 aa).

NAD(+)-binding positions include 48–53 (GASSGY), 74–75 (FE), 111–112 (DA), and 139–140 (LA). A substrate-binding site is contributed by tyrosine 225. The Proton donor role is filled by tyrosine 235. Residues lysine 244 and 273 to 275 (VVT) contribute to the NAD(+) site.

The protein belongs to the TER reductase family. Monomer.

It carries out the reaction a 2,3-saturated acyl-[ACP] + NAD(+) = a (2E)-enoyl-[ACP] + NADH + H(+). The protein operates within lipid metabolism; fatty acid biosynthesis. Its function is as follows. Involved in the final reduction of the elongation cycle of fatty acid synthesis (FAS II). Catalyzes the reduction of a carbon-carbon double bond in an enoyl moiety that is covalently linked to an acyl carrier protein (ACP). The protein is Enoyl-[acyl-carrier-protein] reductase [NADH] 1 of Vibrio parahaemolyticus serotype O3:K6 (strain RIMD 2210633).